The following is a 277-amino-acid chain: Putative phosphoenolpyruvate synthase regulatory protein (277 aa).

157–164 (GVSRCGKT) is an ADP binding site.

It belongs to the pyruvate, phosphate/water dikinase regulatory protein family. PSRP subfamily.

The enzyme catalyses [pyruvate, water dikinase] + ADP = [pyruvate, water dikinase]-phosphate + AMP + H(+). It catalyses the reaction [pyruvate, water dikinase]-phosphate + phosphate + H(+) = [pyruvate, water dikinase] + diphosphate. Its function is as follows. Bifunctional serine/threonine kinase and phosphorylase involved in the regulation of the phosphoenolpyruvate synthase (PEPS) by catalyzing its phosphorylation/dephosphorylation. The chain is Putative phosphoenolpyruvate synthase regulatory protein from Klebsiella pneumoniae subsp. pneumoniae (strain ATCC 700721 / MGH 78578).